Here is a 110-residue protein sequence, read N- to C-terminus: Chelonianin (110 aa).

Gln1 bears the Pyrrolidone carboxylic acid mark. One can recognise a BPTI/Kunitz inhibitor domain in the interval 8–58 (CRLPPEQGPCKGRIPRYFYNPASRMCESFIYGGCKGNKNNFKTKAECVRAC). Intrachain disulfides connect Cys8/Cys58, Cys17/Cys41, Cys33/Cys54, Cys67/Cys92, Cys76/Cys97, Cys80/Cys93, and Cys86/Cys101. The region spanning 60–105 (PPERPGVCPKTSGPGICLHGCDSDSDCKEGQKCCFDGCGYICLTVA) is the WAP domain.

Its function is as follows. The first domain inhibits trypsin; the second one inhibitis subtilisin. This Caretta caretta (Loggerhead sea turtle) protein is Chelonianin.